A 297-amino-acid polypeptide reads, in one-letter code: Protease HtpX homolog (297 aa).

The chain crosses the membrane as a helical span at residues 16–36 (IFMAIGFLVGGMAGMILAFVV). Residue H134 participates in Zn(2+) binding. The active site involves E135. Position 138 (H138) interacts with Zn(2+). 2 helical membrane-spanning segments follow: residues 147–167 (MTVT…ALFF) and 175–195 (IGSI…QMAI). Residue E200 participates in Zn(2+) binding.

The protein belongs to the peptidase M48B family. Requires Zn(2+) as cofactor.

It localises to the cell inner membrane. The polypeptide is Protease HtpX homolog (Hyphomonas neptunium (strain ATCC 15444)).